Here is a 490-residue protein sequence, read N- to C-terminus: Fumitremorgin C monooxygenase (490 aa).

A helical membrane pass occupies residues 12–32 (LGVVGASLIVILGIILLFPLG). C442 lines the heme pocket.

This sequence belongs to the cytochrome P450 family. Heme serves as cofactor.

Its subcellular location is the membrane. It carries out the reaction fumitremorgin C + 2 reduced [NADPH--hemoprotein reductase] + 2 O2 = 12alpha,13alpha-dihydroxyfumitremorgin C + 2 oxidized [NADPH--hemoprotein reductase] + 2 H2O + 2 H(+). Its pathway is mycotoxin biosynthesis. Cytochrome P450 monooxygenase; part of the gene cluster that mediates the biosynthesis of fumitremorgins, indole alkaloids that carry not only intriguing chemical structures, but also interesting biological and pharmacological activities. The biosynthesis of fumitremorgin-type alkaloids begins by condensation of the two amino acids L-tryptophan and L-proline to brevianamide F, catalyzed by the non-ribosomal peptide synthetase ftmA. Brevianamide F is then prenylated by the prenyltransferase ftmPT1/ftmB in the presence of dimethylallyl diphosphate, resulting in the formation of tryprostatin B. The three cytochrome P450 monooxygenases, ftmP450-1/ftmC, ftmP450-2/ftmE and ftmP450-3/FtmG, are responsible for the conversion of tryprostatin B to 6-hydroxytryprostatin B, tryprostatin A to fumitremorgin C and fumitremorgin C to 12,13-dihydroxyfumitremorgin C, respectively. The putative methyltransferase ftmMT/ftmD is expected for the conversion of 6-hydroxytryprostatin B to tryprostatin A. FtmPT2/FtmH catalyzes the prenylation of 12,13-dihydroxyfumitre-morgin C in the presence of dimethylallyl diphosphate, resulting in the formation of fumitremorgin B. Fumitremorgin B is further converted to verruculogen by ftmOx1/ftmF via the insertion of an endoperoxide bond between the two prenyl moieties. In some fungal species, verruculogen is further converted to fumitremorgin A, but the enzymes involved in this step have not been identified yet. The sequence is that of Fumitremorgin C monooxygenase from Aspergillus fumigatus (strain ATCC MYA-4609 / CBS 101355 / FGSC A1100 / Af293) (Neosartorya fumigata).